A 702-amino-acid polypeptide reads, in one-letter code: Elongation factor G (702 aa).

The region spanning Ala-8 to Thr-290 is the tr-type G domain. Residues Ala-17–Thr-24, Asp-88–His-92, and Asn-142–Asp-145 each bind GTP.

The protein belongs to the TRAFAC class translation factor GTPase superfamily. Classic translation factor GTPase family. EF-G/EF-2 subfamily.

It is found in the cytoplasm. Catalyzes the GTP-dependent ribosomal translocation step during translation elongation. During this step, the ribosome changes from the pre-translocational (PRE) to the post-translocational (POST) state as the newly formed A-site-bound peptidyl-tRNA and P-site-bound deacylated tRNA move to the P and E sites, respectively. Catalyzes the coordinated movement of the two tRNA molecules, the mRNA and conformational changes in the ribosome. In Photorhabdus laumondii subsp. laumondii (strain DSM 15139 / CIP 105565 / TT01) (Photorhabdus luminescens subsp. laumondii), this protein is Elongation factor G.